Consider the following 389-residue polypeptide: uncharacterized protein (389 aa).

Belongs to the mimivirus L17x/L18x family.

This is an uncharacterized protein from Acanthamoeba polyphaga mimivirus (APMV).